We begin with the raw amino-acid sequence, 320 residues long: Cytochrome f (320 aa).

Residues 1–35 form the signal peptide; that stretch reads MENRNTFSWVKEQITRSISVSIMIYVITRTSISNA. Heme contacts are provided by tyrosine 36, cysteine 56, cysteine 59, and histidine 60. A helical membrane pass occupies residues 286 to 305; it reads VQGLLFFFASVILAQVFLVL.

The protein belongs to the cytochrome f family. In terms of assembly, the 4 large subunits of the cytochrome b6-f complex are cytochrome b6, subunit IV (17 kDa polypeptide, petD), cytochrome f and the Rieske protein, while the 4 small subunits are PetG, PetL, PetM and PetN. The complex functions as a dimer. It depends on heme as a cofactor.

It is found in the plastid. Its subcellular location is the chloroplast thylakoid membrane. Component of the cytochrome b6-f complex, which mediates electron transfer between photosystem II (PSII) and photosystem I (PSI), cyclic electron flow around PSI, and state transitions. The polypeptide is Cytochrome f (petA) (Triticum aestivum (Wheat)).